We begin with the raw amino-acid sequence, 51 residues long: uncharacterized protein (51 aa).

The disordered stretch occupies residues 1 to 24; that stretch reads MGGRFSGRVGIEKGGHPPSAADHS.

This is an uncharacterized protein from Escherichia coli.